Consider the following 243-residue polypeptide: MWRRQVGALLLRHRSTPSSTLRHHLPLPVPDQSPPLASNLLLRLFTSQSGEGGDGATKPFIAFVLGGPGSGKGTQCVRIASDFGFAHLSAGDLLRSEISTGREKGELILNIIKEGKIVPSEITVELIRKAMESSDAKRVLIDGFPRCEENRIAFERITGTEPDLVIFFDCPEDEMVKRLLGRNQGRVDDNIETIKKRLKVFESLNIPVVDYYTSRGKVHKINATGTEEEIFGAVHKLFSSLRF.

69–74 is an ATP binding site; sequence GSGKGT. The tract at residues 89-118 is NMP; it reads SAGDLLRSEISTGREKGELILNIIKEGKIV. Residues arginine 95, 116 to 118, and 143 to 146 each bind a ribonucleoside 5'-phosphate; these read KIV and GFPR. CMP is bound at residue asparagine 150. Positions 181 to 189 are LID; sequence GRNQGRVDD. Arginine 182 is an ATP binding site. Arginine 186 and arginine 197 together coordinate a ribonucleoside 5'-phosphate.

The protein belongs to the adenylate kinase family. UMP-CMP kinase subfamily. In terms of assembly, monomer. Requires Mg(2+) as cofactor.

It is found in the cytoplasm. The protein resides in the nucleus. It catalyses the reaction UMP + ATP = UDP + ADP. The catalysed reaction is CMP + ATP = CDP + ADP. The enzyme catalyses dCMP + ATP = dCDP + ADP. Catalyzes the phosphorylation of pyrimidine nucleoside monophosphates at the expense of ATP. Plays an important role in de novo pyrimidine nucleotide biosynthesis. Has preference for UMP and CMP as phosphate acceptors. This is UMP-CMP kinase 2 from Oryza sativa subsp. japonica (Rice).